A 332-amino-acid chain; its full sequence is 2,3-diketo-L-gulonate reductase (332 aa).

His44 (proton donor) is an active-site residue. Residues 168 to 174 (ITMVDMS), 224 to 225 (WK), and 304 to 306 (GHE) contribute to the NAD(+) site.

The protein belongs to the LDH2/MDH2 oxidoreductase family. DlgD subfamily. As to quaternary structure, homodimer.

Its subcellular location is the cytoplasm. It catalyses the reaction 3-dehydro-L-gulonate + NAD(+) = 2,3-dioxo-L-gulonate + NADH + H(+). It carries out the reaction 3-dehydro-L-gulonate + NADP(+) = 2,3-dioxo-L-gulonate + NADPH + H(+). In terms of biological role, catalyzes the reduction of 2,3-diketo-L-gulonate in the presence of NADH, to form 3-keto-L-gulonate. This Mannheimia succiniciproducens (strain KCTC 0769BP / MBEL55E) protein is 2,3-diketo-L-gulonate reductase.